The following is a 689-amino-acid chain: Transcription factor MYC2 (689 aa).

Residues 94 to 172 (LQQRLQALID…VLRELNSLIS (79 aa)) are JAZ-interaction domain. The span at 316–349 (NTVQTNSVPSSNSNKQIAYGNENNHPSGNGQSCY) shows a compositional bias: polar residues. Disordered regions lie at residues 316 to 361 (NTVQ…PQQQ) and 420 to 519 (QSQF…EAER). Positions 350–361 (NQQQQKNPPQQQ) are enriched in low complexity. Positions 471-495 (DSEHSDLEASVVKEADSSRVVEPEK) are enriched in basic and acidic residues. The span at 496-505 (RPRKRGRKPA) shows a compositional bias: basic residues. Over residues 506–519 (NGREEPLNHVEAER) the composition is skewed to basic and acidic residues. The tract at residues 509–522 (EEPLNHVEAERQRR) is basic motif; degenerate. The region spanning 509–558 (EEPLNHVEAERQRREKLNQRFYALRAVVPNVSKMDKASLLGDAISYINEL) is the bHLH domain. The helix-loop-helix motif stretch occupies residues 523–558 (EKLNQRFYALRAVVPNVSKMDKASLLGDAISYINEL). Residues 563-602 (QNTESDKEDLKSQIEDLKKESRRPGPPPPPNQDLKMSSHT) form a disordered region. The segment covering 566–585 (ESDKEDLKSQIEDLKKESRR) has biased composition (basic and acidic residues).

Interacts (via N-terminus) with MED25. Interacts (via N-terminus) with JAZ7. MED25 and JAZ7 compete with each other to bind to MYC2. Interacts (via N-terminus) with MTB1. MTB1 and MED25 compete with each other to bind to MYC2. Expressed at low levels in roots, stems, leaves, flowers and fruits.

The protein resides in the nucleus. In terms of biological role, transcriptional activator that binds to the G-box motif (5'-AACGTG-3') found in the promoter of the jasmonate-induced gene LAPA1. Acts as a negative regulator of blue light-mediated photomorphogenesis and positively regulates root growth. Promotes growth in response to the phytohormones abscisic acid (ABA) and jasmonate (JA). Binds to the G-box motif (5'-CACGTG-3') of the RBCS-3A gene promoter. Acts downstream of the jasmonate (JA) receptor to orchestrate JA-mediated activation of plant responses. Positively regulates both wound-responsive and pathogen-responsive genes through MYC2-targeted transcription factors (MTFs) involved in early response to JA. With JA2L forms a transcription module that regulates wounding-responsive genes. With ERF.C3 forms a transcription module that regulates pathogen-responsive genes. Plays a critical role in orchestrating JA-mediated defense gene expression during Botrytis cinerea infection. Negatively regulates defense responses to root-knot nematodes, potentially by mediating crosstalk among the hormones strigolactones, abscisic acid (ABA) and jasmonate (JA). Regulates the termination of JA-mediated defense responses by specifically binding the G-box (5'-CACATG-3') motifs in the promoters of MTB1, MTB2 and MTB3, which are transcription factors that negatively regulates JA signaling. May be involved in JA-induced chilling tolerance, possibly by ameliorating the antioxidant enzyme system of fruit and increasing proline and lycopene levels. This Solanum lycopersicum (Tomato) protein is Transcription factor MYC2.